A 119-amino-acid polypeptide reads, in one-letter code: MSTFAVLLLCVQACLIQNVYSQCLGRVGPGGPPLGPYGGPLGGPGYGPVGYGGCGGYGGSGIGNVAVAGELPVAGSTGVMGQVPVIGAVEFAGPACAVGSVSISGACGPTCGCGGSPYY.

An N-terminal signal peptide occupies residues 1–21 (MSTFAVLLLCVQACLIQNVYS). Positions 22-55 (QCLGRVGPGGPPLGPYGGPLGGPGYGPVGYGGCG) are left arm. Residues 56 to 103 (GYGGSGIGNVAVAGELPVAGSTGVMGQVPVIGAVEFAGPACAVGSVSI) are central domain. The segment at 104–119 (SGACGPTCGCGGSPYY) is right arm.

This sequence belongs to the chorion protein family.

In terms of biological role, this protein is one of many from the eggshell of the silk moth. This chain is Chorion class CA protein ERA.1 (ERA.1), found in Bombyx mori (Silk moth).